Reading from the N-terminus, the 148-residue chain is MSSELNLKLLGTKTPYIFEYNKDLLEAFPNPNPNLDPLITLECKEFTSLCPITSQPDFGVVYIRYIPKDKMVESKSLKLYLFSYRNHGSFHESCINTILLDLVGLLEPKYLEVYGDFVSRGGIAIKPFVNYAIKEYQDFKEKRLLGAK.

Cys-50 acts as the Thioimide intermediate in catalysis. The active-site Proton donor is Asp-57. Residues 72-74 and 91-92 contribute to the substrate site; these read VES and HE.

It belongs to the GTP cyclohydrolase I family. QueF type 1 subfamily.

It is found in the cytoplasm. The enzyme catalyses 7-aminomethyl-7-carbaguanine + 2 NADP(+) = 7-cyano-7-deazaguanine + 2 NADPH + 3 H(+). It functions in the pathway tRNA modification; tRNA-queuosine biosynthesis. Functionally, catalyzes the NADPH-dependent reduction of 7-cyano-7-deazaguanine (preQ0) to 7-aminomethyl-7-deazaguanine (preQ1). The chain is NADPH-dependent 7-cyano-7-deazaguanine reductase from Helicobacter acinonychis (strain Sheeba).